A 374-amino-acid chain; its full sequence is P2Y purinoceptor 11 (374 aa).

Residues 1–29 (MAANVSGAKSCPANFLAAADDKLSGFQGD) are Extracellular-facing. Residue asparagine 4 is glycosylated (N-linked (GlcNAc...) asparagine). Residues 30 to 50 (FLWPILVVEFLVAVASNGLAL) form a helical membrane-spanning segment. The Cytoplasmic segment spans residues 51 to 64 (YRFSIRKQRPWHPA). The helical transmembrane segment at 65 to 85 (VVFSVQLAVSDLLCALTLPPL) threads the bilayer. The Extracellular segment spans residues 86 to 116 (AAYLYPPKHWRYGEAACRLERFLFTCNLLGS). A disulfide bridge links cysteine 102 with cysteine 180. Residues 117 to 137 (VIFITCISLNRYLGIVHPFFA) traverse the membrane as a helical segment. The Cytoplasmic segment spans residues 138 to 146 (RSHLRPKHA). Residues 147 to 167 (WAVSAAGWVLAALLAMPTLSF) traverse the membrane as a helical segment. Topologically, residues 168–206 (SHLKRPQQGAGNCSVARPEACIKCLGTADHGLAAYRAYS) are extracellular. Asparagine 179 carries an N-linked (GlcNAc...) asparagine glycan. A helical transmembrane segment spans residues 207–227 (LVLAGLGCGLPLLLTLAAYGA). The Cytoplasmic portion of the chain corresponds to 228–245 (LGRAVLRSPGMTVAEKLR). The chain crosses the membrane as a helical span at residues 246-266 (VAALVASGVALYASSYVPYHI). Residues 267 to 308 (MRVLNVDARRRWSTRCPSFADIAQATAALELGPYVGYQVMRG) lie on the Extracellular side of the membrane. A helical transmembrane segment spans residues 309–329 (LMPLAFCVHPLLYMAAVPSLG). The Cytoplasmic segment spans residues 330–374 (CCCRHCPGYRDSWNPEDAKSTGQALPLNATAAPKPSEPQSRELSQ). The interval 345 to 374 (EDAKSTGQALPLNATAAPKPSEPQSRELSQ) is disordered.

This sequence belongs to the G-protein coupled receptor 1 family. In terms of tissue distribution, highest expression in liver and spleen.

The protein localises to the cell membrane. Functionally, receptor for ATP and ADP coupled to G-proteins that activate both phosphatidylinositol-calcium and adenylyl cyclase second messenger systems. Not activated by UTP or UDP. This is P2Y purinoceptor 11 (P2RY11) from Homo sapiens (Human).